The chain runs to 176 residues: Disulfide bond formation protein B (176 aa).

Residues 1–14 (MLRFLNQCSQGRGA) are Cytoplasmic-facing. A helical membrane pass occupies residues 15-31 (WLLMAFTALALELTALW). Residues 32-49 (FQHVMLLKPCVLCIYERC) are Periplasmic-facing. The cysteines at positions 41 and 44 are disulfide-linked. The chain crosses the membrane as a helical span at residues 50-65 (ALFGVLGAALIGAIAP). Over 66–71 (KTPLRY) the chain is Cytoplasmic. The helical transmembrane segment at 72–89 (VAMVIWLYSAFRGVQLTY) threads the bilayer. The Periplasmic segment spans residues 90-144 (EHTMLQLYPSPFATCDFMVRFPEWLPLDKWVPQVFVASGDCAERQWDFLGMEMPQ). Residues cysteine 104 and cysteine 130 are joined by a disulfide bond. The helical transmembrane segment at 145–163 (WLLGIFIAYLIVAVLVVIS) threads the bilayer. The Cytoplasmic segment spans residues 164–176 (QPFKAKKRDLFGR).

The protein belongs to the DsbB family.

It localises to the cell inner membrane. Functionally, required for disulfide bond formation in some periplasmic proteins such as PhoA or OmpA. Acts by oxidizing the DsbA protein. This Shigella flexneri protein is Disulfide bond formation protein B.